A 956-amino-acid polypeptide reads, in one-letter code: RNA-binding protein 44 (956 aa).

The tract at residues 301–321 (DNTQNNQNQSYNPTEENDHNV) is disordered. An RRM domain is found at 750–824 (SLLCITCLPG…HAVQVVHLSG (75 aa)). The segment at 831-855 (KPSDLSHSASESHKEDTAGDELRTK) is disordered. Residues 840–854 (SESHKEDTAGDELRT) are compositionally biased toward basic and acidic residues.

It is found in the cytoplasm. Functionally, component of intercellular bridges during meiosis. Intercellular bridges are evolutionarily conserved structures that connect differentiating germ cells. Not required for fertility. The polypeptide is RNA-binding protein 44 (rbm44) (Danio rerio (Zebrafish)).